We begin with the raw amino-acid sequence, 387 residues long: Succinate--CoA ligase [ADP-forming] subunit beta (387 aa).

The ATP-grasp domain maps to 9-236 (KELFAKHNVP…RAATDPLELK (228 aa)). Residues Lys45, 52–54 (GRG), Ser94, and Glu99 each bind ATP. Positions 191 and 205 each coordinate Mg(2+). Substrate is bound by residues Asn256 and 318–320 (GIT).

It belongs to the succinate/malate CoA ligase beta subunit family. In terms of assembly, heterotetramer of two alpha and two beta subunits. Mg(2+) is required as a cofactor.

It carries out the reaction succinate + ATP + CoA = succinyl-CoA + ADP + phosphate. The catalysed reaction is GTP + succinate + CoA = succinyl-CoA + GDP + phosphate. It participates in carbohydrate metabolism; tricarboxylic acid cycle; succinate from succinyl-CoA (ligase route): step 1/1. In terms of biological role, succinyl-CoA synthetase functions in the citric acid cycle (TCA), coupling the hydrolysis of succinyl-CoA to the synthesis of either ATP or GTP and thus represents the only step of substrate-level phosphorylation in the TCA. The beta subunit provides nucleotide specificity of the enzyme and binds the substrate succinate, while the binding sites for coenzyme A and phosphate are found in the alpha subunit. This Mycobacterium bovis (strain ATCC BAA-935 / AF2122/97) protein is Succinate--CoA ligase [ADP-forming] subunit beta.